A 710-amino-acid chain; its full sequence is Polyribonucleotide nucleotidyltransferase (710 aa).

The Mg(2+) site is built by Asp-488 and Asp-494. The region spanning Pro-555 to Ile-614 is the KH domain. Residues Gly-624–Lys-692 enclose the S1 motif domain.

This sequence belongs to the polyribonucleotide nucleotidyltransferase family. It depends on Mg(2+) as a cofactor.

The protein resides in the cytoplasm. The enzyme catalyses RNA(n+1) + phosphate = RNA(n) + a ribonucleoside 5'-diphosphate. Functionally, involved in mRNA degradation. Catalyzes the phosphorolysis of single-stranded polyribonucleotides processively in the 3'- to 5'-direction. In Maricaulis maris (strain MCS10) (Caulobacter maris), this protein is Polyribonucleotide nucleotidyltransferase.